Reading from the N-terminus, the 386-residue chain is Succinyl-diaminopimelate desuccinylase (386 aa).

A Zn(2+)-binding site is contributed by H72. The active site involves D74. Residue D105 participates in Zn(2+) binding. The active-site Proton acceptor is the E139. Residues E140, E168, and H353 each contribute to the Zn(2+) site.

Belongs to the peptidase M20A family. DapE subfamily. Homodimer. Zn(2+) serves as cofactor. The cofactor is Co(2+).

The enzyme catalyses N-succinyl-(2S,6S)-2,6-diaminopimelate + H2O = (2S,6S)-2,6-diaminopimelate + succinate. It functions in the pathway amino-acid biosynthesis; L-lysine biosynthesis via DAP pathway; LL-2,6-diaminopimelate from (S)-tetrahydrodipicolinate (succinylase route): step 3/3. Catalyzes the hydrolysis of N-succinyl-L,L-diaminopimelic acid (SDAP), forming succinate and LL-2,6-diaminopimelate (DAP), an intermediate involved in the bacterial biosynthesis of lysine and meso-diaminopimelic acid, an essential component of bacterial cell walls. The protein is Succinyl-diaminopimelate desuccinylase of Rhodospirillum centenum (strain ATCC 51521 / SW).